A 390-amino-acid chain; its full sequence is LL-diaminopimelate aminotransferase 2 (390 aa).

Substrate-binding residues include tyrosine 13 and glycine 38. Pyridoxal 5'-phosphate-binding positions include tyrosine 67, 102-103, tyrosine 127, asparagine 177, tyrosine 208, and 236-238; these read SK and SLS. Substrate-binding residues include lysine 103, tyrosine 127, and asparagine 177. Lysine 239 carries the N6-(pyridoxal phosphate)lysine modification. A pyridoxal 5'-phosphate-binding site is contributed by arginine 247. Residue arginine 365 participates in substrate binding.

Belongs to the class-I pyridoxal-phosphate-dependent aminotransferase family. LL-diaminopimelate aminotransferase subfamily. Homodimer. The cofactor is pyridoxal 5'-phosphate.

The catalysed reaction is (2S,6S)-2,6-diaminopimelate + 2-oxoglutarate = (S)-2,3,4,5-tetrahydrodipicolinate + L-glutamate + H2O + H(+). Its pathway is amino-acid biosynthesis; L-lysine biosynthesis via DAP pathway; LL-2,6-diaminopimelate from (S)-tetrahydrodipicolinate (aminotransferase route): step 1/1. In terms of biological role, involved in the synthesis of meso-diaminopimelate (m-DAP or DL-DAP), required for both lysine and peptidoglycan biosynthesis. Catalyzes the direct conversion of tetrahydrodipicolinate to LL-diaminopimelate. This Trichormus variabilis (strain ATCC 29413 / PCC 7937) (Anabaena variabilis) protein is LL-diaminopimelate aminotransferase 2.